Reading from the N-terminus, the 158-residue chain is Phosphopantetheine adenylyltransferase (158 aa).

Thr-9 is a binding site for substrate. ATP is bound by residues 9 to 10 (TF) and His-17. 3 residues coordinate substrate: Lys-41, Leu-73, and Arg-87. Residues 88-90 (GVR), Glu-98, and 123-129 (WSYVSST) contribute to the ATP site.

The protein belongs to the bacterial CoaD family. Homohexamer. The cofactor is Mg(2+).

The protein resides in the cytoplasm. It carries out the reaction (R)-4'-phosphopantetheine + ATP + H(+) = 3'-dephospho-CoA + diphosphate. It participates in cofactor biosynthesis; coenzyme A biosynthesis; CoA from (R)-pantothenate: step 4/5. Its function is as follows. Reversibly transfers an adenylyl group from ATP to 4'-phosphopantetheine, yielding dephospho-CoA (dPCoA) and pyrophosphate. This is Phosphopantetheine adenylyltransferase from Pasteurella multocida (strain Pm70).